The sequence spans 125 residues: MPTINQLVRQGREVEVTKSKSPAMQNCPQRRGVCTRVYTTTPKKPNSALRKVAKVRLTNGFEVISYIGGEGHNLQEHSVVLVRGGRVKDLPGVRYHIVRGSLDLQGVKDRKQSRSKYGSKRPKKA.

Asp-89 bears the 3-methylthioaspartic acid mark. The interval 104-125 is disordered; sequence LQGVKDRKQSRSKYGSKRPKKA. Positions 113–125 are enriched in basic residues; it reads SRSKYGSKRPKKA.

The protein belongs to the universal ribosomal protein uS12 family. Part of the 30S ribosomal subunit. Contacts proteins S8 and S17. May interact with IF1 in the 30S initiation complex.

In terms of biological role, with S4 and S5 plays an important role in translational accuracy. Interacts with and stabilizes bases of the 16S rRNA that are involved in tRNA selection in the A site and with the mRNA backbone. Located at the interface of the 30S and 50S subunits, it traverses the body of the 30S subunit contacting proteins on the other side and probably holding the rRNA structure together. The combined cluster of proteins S8, S12 and S17 appears to hold together the shoulder and platform of the 30S subunit. The chain is Small ribosomal subunit protein uS12 from Leptothrix cholodnii (strain ATCC 51168 / LMG 8142 / SP-6) (Leptothrix discophora (strain SP-6)).